The primary structure comprises 155 residues: MSRRGTAEKKTAKSDPIYRNRLVNMLVNRILKHGKKSLAYQIIYRAVKKIQQKTETNPLSVLRQAIRGVTPDITVKARRVGGSTHQVPIEIGSTQGKALAIRWLLAASRKRPGRNMAFKLSSELVDAAKGSGDAIRKKEETHRMAEANRAFAHFR.

This sequence belongs to the universal ribosomal protein uS7 family. In terms of assembly, part of the 30S ribosomal subunit.

It localises to the plastid. The protein localises to the chloroplast. One of the primary rRNA binding proteins, it binds directly to 16S rRNA where it nucleates assembly of the head domain of the 30S subunit. This is Small ribosomal subunit protein uS7cz/uS7cy (rps7-A) from Atropa belladonna (Belladonna).